Here is an 81-residue protein sequence, read N- to C-terminus: MAVKIRLKRMGAKKRPFYRVVVADSRYPRDGRFIEEIGTYNPLTEPSEIKIDTEKAQKWLKNGAQPTDTVRALLKKVGVIS.

It belongs to the bacterial ribosomal protein bS16 family.

The chain is Small ribosomal subunit protein bS16 from Acetivibrio thermocellus (strain ATCC 27405 / DSM 1237 / JCM 9322 / NBRC 103400 / NCIMB 10682 / NRRL B-4536 / VPI 7372) (Clostridium thermocellum).